We begin with the raw amino-acid sequence, 336 residues long: Isopentenyl-diphosphate delta-isomerase (336 aa).

5-6 (RK) contributes to the substrate binding site. FMN is bound by residues 60 to 62 (AMT), Ser90, and Asn117. Gln147 lines the substrate pocket. Residue Glu148 coordinates Mg(2+). Residues Lys179, Ser204, Thr209, 253-255 (GVR), and 274-275 (SR) contribute to the FMN site.

Belongs to the IPP isomerase type 2 family. In terms of assembly, homooctamer. Dimer of tetramers. It depends on FMN as a cofactor. Requires NADPH as cofactor. Mg(2+) is required as a cofactor.

Its subcellular location is the cytoplasm. The enzyme catalyses isopentenyl diphosphate = dimethylallyl diphosphate. Involved in the biosynthesis of isoprenoids. Catalyzes the 1,3-allylic rearrangement of the homoallylic substrate isopentenyl (IPP) to its allylic isomer, dimethylallyl diphosphate (DMAPP). The chain is Isopentenyl-diphosphate delta-isomerase from Streptococcus pneumoniae (strain 70585).